Reading from the N-terminus, the 352-residue chain is Ion-translocating oxidoreductase complex subunit D (352 aa).

4 helical membrane passes run 20-40 (IMLL…WFFG), 44-64 (LFQI…VLSL), 78-109 (ALLT…IIIA), and 123-143 (PAMI…TSWL). Thr-187 is subject to FMN phosphoryl threonine. 5 consecutive transmembrane segments (helical) span residues 214-234 (VLAG…GVFL), 242-262 (WHIP…GWLF), 267-287 (LASP…FFIL), 301-321 (LIFG…GGYP), and 322-342 (DGVA…DYYT).

This sequence belongs to the NqrB/RnfD family. The complex is composed of six subunits: RsxA, RsxB, RsxC, RsxD, RsxE and RsxG. It depends on FMN as a cofactor.

It is found in the cell inner membrane. Functionally, part of a membrane-bound complex that couples electron transfer with translocation of ions across the membrane. Required to maintain the reduced state of SoxR. This chain is Ion-translocating oxidoreductase complex subunit D, found in Salmonella arizonae (strain ATCC BAA-731 / CDC346-86 / RSK2980).